The following is a 731-amino-acid chain: Inducible ornithine decarboxylase (731 aa).

Lysine 356 carries the N6-(pyridoxal phosphate)lysine modification.

The protein belongs to the Orn/Lys/Arg decarboxylase class-I family. As to quaternary structure, dodecamer. It depends on pyridoxal 5'-phosphate as a cofactor.

It catalyses the reaction L-ornithine + H(+) = putrescine + CO2. The polypeptide is Inducible ornithine decarboxylase (odcI) (Lactobacillus sp. (strain 30a)).